The following is a 430-amino-acid chain: Glutamate-1-semialdehyde 2,1-aminomutase (430 aa).

Residue lysine 267 is modified to N6-(pyridoxal phosphate)lysine.

Belongs to the class-III pyridoxal-phosphate-dependent aminotransferase family. HemL subfamily. As to quaternary structure, homodimer. Pyridoxal 5'-phosphate serves as cofactor.

The protein localises to the cytoplasm. It catalyses the reaction (S)-4-amino-5-oxopentanoate = 5-aminolevulinate. It participates in porphyrin-containing compound metabolism; protoporphyrin-IX biosynthesis; 5-aminolevulinate from L-glutamyl-tRNA(Glu): step 2/2. The sequence is that of Glutamate-1-semialdehyde 2,1-aminomutase from Thermomicrobium roseum (strain ATCC 27502 / DSM 5159 / P-2).